The primary structure comprises 150 residues: Macrodomain Ter protein (150 aa).

This sequence belongs to the MatP family. In terms of assembly, homodimer.

The protein localises to the cytoplasm. Its function is as follows. Required for spatial organization of the terminus region of the chromosome (Ter macrodomain) during the cell cycle. Prevents early segregation of duplicated Ter macrodomains during cell division. Binds specifically to matS, which is a 13 bp signature motif repeated within the Ter macrodomain. The sequence is that of Macrodomain Ter protein from Escherichia coli O81 (strain ED1a).